The following is a 291-amino-acid chain: N-acetylmannosamine kinase (291 aa).

ATP is bound by residues 5 to 12 and 132 to 139; these read AIDIGGTK and GVGGGVVC. Residues H156, C166, C168, and C173 each contribute to the Zn(2+) site.

It belongs to the ROK (NagC/XylR) family. NanK subfamily. Homodimer.

It carries out the reaction an N-acyl-D-mannosamine + ATP = an N-acyl-D-mannosamine 6-phosphate + ADP + H(+). The protein operates within amino-sugar metabolism; N-acetylneuraminate degradation; D-fructose 6-phosphate from N-acetylneuraminate: step 2/5. Its function is as follows. Catalyzes the phosphorylation of N-acetylmannosamine (ManNAc) to ManNAc-6-P. This chain is N-acetylmannosamine kinase, found in Salmonella dublin (strain CT_02021853).